The following is a 440-amino-acid chain: Beta-1,3-galactosyl-O-glycosyl-glycoprotein beta-1,6-N-acetylglucosaminyltransferase (440 aa).

The Cytoplasmic portion of the chain corresponds to 1–12 (MKMAGWKKKLCR). A helical; Signal-anchor for type II membrane protein membrane pass occupies residues 13-30 (GHHLWALGCYMLLAVVSL). Residues 31–440 (RLSLRFKCDV…RHKAIYGTEL (410 aa)) are Lumenal-facing. N-linked (GlcNAc...) asparagine; by host glycans are attached at residues N72 and N108. 4 cysteine pairs are disulfide-bonded: C73/C230, C164/C384, C185/C212, and C393/C425.

Belongs to the glycosyltransferase 14 family.

The protein localises to the host Golgi apparatus membrane. The catalysed reaction is a 3-O-[beta-D-galactosyl-(1-&gt;3)-N-acetyl-alpha-D-galactosaminyl]-L-seryl-[protein] + UDP-N-acetyl-alpha-D-glucosamine = 3-O-{beta-D-galactosyl-(1-&gt;3)-[N-acetyl-beta-D-glucosaminyl-(1-&gt;6)]-N-acetyl-alpha-D-galactosaminyl}-L-seryl-[protein] + UDP + H(+). It carries out the reaction a 3-O-[beta-D-galactosyl-(1-&gt;3)-N-acetyl-alpha-D-galactosaminyl]-L-threonyl-[protein] + UDP-N-acetyl-alpha-D-glucosamine = a 3-O-{beta-D-galactosyl-(1-&gt;3)-[N-acetyl-beta-D-glucosaminyl-(1-&gt;6)]-N-acetyl-alpha-D-galactosaminyl}-L-threonyl-[protein] + UDP + H(+). The enzyme catalyses a beta-D-Gal-(1-&gt;4)-beta-D-GlcNAc-(1-&gt;3)-beta-D-Gal-(1-&gt;4)-beta-D-GlcNAc derivative + UDP-N-acetyl-alpha-D-glucosamine = a beta-D-Gal-(1-&gt;4)-beta-D-GlcNAc-(1-&gt;3)-[beta-D-GlcNAc-(1-&gt;6)]-beta-D-Gal-(1-&gt;4)-N-acetyl-beta-D-glucosaminyl derivative + UDP + H(+). It catalyses the reaction 3-O-[N-acetyl-beta-D-glucosaminyl-(1-&gt;3)-N-acetyl-alpha-D-galactosaminyl]-L-seryl-[protein] + UDP-N-acetyl-alpha-D-glucosamine = 3-O-[N-acetyl-beta-D-glucosaminyl-(1-&gt;3)-[N-acetyl-beta-D-glucosaminyl-(1-&gt;6)]-N-acetyl-alpha-D-galactosaminyl]-L-seryl-[protein] + UDP + H(+). The catalysed reaction is a 3-O-[N-acetyl-beta-D-glucosaminyl-(1-&gt;3)-N-acetyl-alpha-D-galactosaminyl]-L-threonyl-[protein] + UDP-N-acetyl-alpha-D-glucosamine = 3-O-[N-acetyl-beta-D-glucosaminyl-(1-&gt;3)-[N-acetyl-beta-D-glucosaminyl-(1-&gt;6)]-N-acetyl-alpha-D-galactosaminyl]-L-threonyl-[protein] + UDP + H(+). It participates in protein modification; protein glycosylation. Its function is as follows. Non-essential glycosyltransferase that can synthesize all known mucin beta 6 N-acetylglucosaminides. Mediates core 2 and core 4 O-glycan branching, 2 important steps in mucin-type biosynthesis. Has also I-branching enzyme activity by converting linear into branched poly-N-acetyllactosaminoglycans. Contributes to the post-translational modifications of structural proteins. This is Beta-1,3-galactosyl-O-glycosyl-glycoprotein beta-1,6-N-acetylglucosaminyltransferase (Bo17) from Bos taurus (Bovine).